A 252-amino-acid polypeptide reads, in one-letter code: Mitochondrial peculiar membrane protein 1 (252 aa).

The disordered stretch occupies residues 230 to 252 (TTTTSKGSSPQVKHKVVSVDEDN).

It is found in the mitochondrion membrane. This chain is Mitochondrial peculiar membrane protein 1 (MPM1), found in Saccharomyces cerevisiae (strain ATCC 204508 / S288c) (Baker's yeast).